The primary structure comprises 207 residues: Urease accessory protein UreG (207 aa).

14–21 (GPVGSGKT) is a binding site for GTP.

Belongs to the SIMIBI class G3E GTPase family. UreG subfamily. As to quaternary structure, homodimer. UreD, UreF and UreG form a complex that acts as a GTP-hydrolysis-dependent molecular chaperone, activating the urease apoprotein by helping to assemble the nickel containing metallocenter of UreC. The UreE protein probably delivers the nickel.

The protein localises to the cytoplasm. Facilitates the functional incorporation of the urease nickel metallocenter. This process requires GTP hydrolysis, probably effectuated by UreG. The chain is Urease accessory protein UreG from Rhodopseudomonas palustris (strain BisB18).